Here is a 234-residue protein sequence, read N- to C-terminus: Proteasome subunit alpha type-6 (234 aa).

Phosphoserine is present on Ser-14. Lys-191 participates in a covalent cross-link: Glycyl lysine isopeptide (Lys-Gly) (interchain with G-Cter in ubiquitin).

This sequence belongs to the peptidase T1A family. In terms of assembly, the 26S proteasome consists of a 20S proteasome core and two 19S regulatory subunits. The 20S proteasome core is composed of 28 subunits that are arranged in four stacked rings, resulting in a barrel-shaped structure. The two end rings are each formed by seven alpha subunits, and the two central rings are each formed by seven beta subunits. The catalytic chamber with the active sites is on the inside of the barrel.

It localises to the cytoplasm. It is found in the nucleus. Its function is as follows. The proteasome degrades poly-ubiquitinated proteins in the cytoplasm and in the nucleus. It is essential for the regulated turnover of proteins and for the removal of misfolded proteins. The proteasome is a multicatalytic proteinase complex that is characterized by its ability to cleave peptides with Arg, Phe, Tyr, Leu, and Glu adjacent to the leaving group at neutral or slightly basic pH. It has an ATP-dependent proteolytic activity. The protein is Proteasome subunit alpha type-6 (PRE5) of Saccharomyces cerevisiae (strain ATCC 204508 / S288c) (Baker's yeast).